Consider the following 400-residue polypeptide: Nicotinate phosphoribosyltransferase (400 aa).

At H220 the chain carries Phosphohistidine; by autocatalysis.

This sequence belongs to the NAPRTase family. Transiently phosphorylated on a His residue during the reaction cycle. Phosphorylation strongly increases the affinity for substrates and increases the rate of nicotinate D-ribonucleotide production. Dephosphorylation regenerates the low-affinity form of the enzyme, leading to product release.

It carries out the reaction nicotinate + 5-phospho-alpha-D-ribose 1-diphosphate + ATP + H2O = nicotinate beta-D-ribonucleotide + ADP + phosphate + diphosphate. It functions in the pathway cofactor biosynthesis; NAD(+) biosynthesis; nicotinate D-ribonucleotide from nicotinate: step 1/1. In terms of biological role, catalyzes the synthesis of beta-nicotinate D-ribonucleotide from nicotinate and 5-phospho-D-ribose 1-phosphate at the expense of ATP. In Salmonella typhi, this protein is Nicotinate phosphoribosyltransferase.